Consider the following 238-residue polypeptide: Phosphoribosylaminoimidazole-succinocarboxamide synthase (238 aa).

Belongs to the SAICAR synthetase family.

It carries out the reaction 5-amino-1-(5-phospho-D-ribosyl)imidazole-4-carboxylate + L-aspartate + ATP = (2S)-2-[5-amino-1-(5-phospho-beta-D-ribosyl)imidazole-4-carboxamido]succinate + ADP + phosphate + 2 H(+). It participates in purine metabolism; IMP biosynthesis via de novo pathway; 5-amino-1-(5-phospho-D-ribosyl)imidazole-4-carboxamide from 5-amino-1-(5-phospho-D-ribosyl)imidazole-4-carboxylate: step 1/2. This is Phosphoribosylaminoimidazole-succinocarboxamide synthase from Persephonella marina (strain DSM 14350 / EX-H1).